We begin with the raw amino-acid sequence, 394 residues long: Elongation factor Tu 1 (394 aa).

Residues 10 to 204 (KPHVNVGTIG…ALDSYIPEPE (195 aa)) form the tr-type G domain. The tract at residues 19-26 (GHVDHGKT) is G1. GTP is bound at residue 19-26 (GHVDHGKT). Thr26 is a binding site for Mg(2+). Positions 60-64 (GITIN) are G2. The segment at 81-84 (DCPG) is G3. Residues 81 to 85 (DCPGH) and 136 to 139 (NKCD) contribute to the GTP site. The segment at 136–139 (NKCD) is G4. A G5 region spans residues 174 to 176 (SAL).

Belongs to the TRAFAC class translation factor GTPase superfamily. Classic translation factor GTPase family. EF-Tu/EF-1A subfamily. In terms of assembly, monomer.

Its subcellular location is the cytoplasm. It catalyses the reaction GTP + H2O = GDP + phosphate + H(+). GTP hydrolase that promotes the GTP-dependent binding of aminoacyl-tRNA to the A-site of ribosomes during protein biosynthesis. In Shewanella oneidensis (strain ATCC 700550 / JCM 31522 / CIP 106686 / LMG 19005 / NCIMB 14063 / MR-1), this protein is Elongation factor Tu 1.